The following is a 352-amino-acid chain: tRNA N6-adenosine threonylcarbamoyltransferase (352 aa).

Histidine 115 and histidine 119 together coordinate Fe cation. Substrate-binding positions include 138–142 (LVSGG), aspartate 171, glycine 184, and asparagine 276. Fe cation is bound at residue aspartate 304.

It belongs to the KAE1 / TsaD family. Requires Fe(2+) as cofactor.

Its subcellular location is the cytoplasm. It carries out the reaction L-threonylcarbamoyladenylate + adenosine(37) in tRNA = N(6)-L-threonylcarbamoyladenosine(37) in tRNA + AMP + H(+). Required for the formation of a threonylcarbamoyl group on adenosine at position 37 (t(6)A37) in tRNAs that read codons beginning with adenine. Is involved in the transfer of the threonylcarbamoyl moiety of threonylcarbamoyl-AMP (TC-AMP) to the N6 group of A37, together with TsaE and TsaB. TsaD likely plays a direct catalytic role in this reaction. This Xanthomonas axonopodis pv. citri (strain 306) protein is tRNA N6-adenosine threonylcarbamoyltransferase.